The primary structure comprises 385 residues: Probable threonine protease PRSS50 (385 aa).

A signal peptide spans 1–39; that stretch reads MGRWCQTVARGQRPRTSAPSRAGALLLLLLLLRSAGCWG. Residues 93 to 358 enclose the Peptidase S1 domain; that stretch reads VSEGKVDPYR…YQHWIWDCLN (266 aa). N133 is a glycosylation site (N-linked (GlcNAc...) asparagine). C138 and C154 form a disulfide bridge. Residues H153 and D206 each act as charge relay system in the active site. 3 cysteine pairs are disulfide-bonded: C240–C316, C273–C296, and C306–C334. Residue N279 is glycosylated (N-linked (GlcNAc...) asparagine). The Charge relay system role is filled by T310.

This sequence belongs to the peptidase S1 family. As to expression, testis specific. Differentially expressed in some breast cancer tissues.

The protein resides in the endoplasmic reticulum. May be involved in proteolysis through its threonine endopeptidase activity. The chain is Probable threonine protease PRSS50 (PRSS50) from Homo sapiens (Human).